The primary structure comprises 531 residues: Peptide chain release factor 3 (531 aa).

One can recognise a tr-type G domain in the interval 10–278 (RRRRTFAIIS…SLIDWAPAPK (269 aa)). Residues 19–26 (SHPDAGKT), 87–91 (DTPGH), and 141–144 (NKYD) each bind GTP.

It belongs to the TRAFAC class translation factor GTPase superfamily. Classic translation factor GTPase family. PrfC subfamily.

The protein localises to the cytoplasm. Its function is as follows. Increases the formation of ribosomal termination complexes and stimulates activities of RF-1 and RF-2. It binds guanine nucleotides and has strong preference for UGA stop codons. It may interact directly with the ribosome. The stimulation of RF-1 and RF-2 is significantly reduced by GTP and GDP, but not by GMP. The sequence is that of Peptide chain release factor 3 from Neisseria gonorrhoeae (strain ATCC 700825 / FA 1090).